Reading from the N-terminus, the 172-residue chain is Small ribosomal subunit protein uS4 (172 aa).

The region spanning 104–168 (RRLQTIVYRK…SPLAKMAQGG (65 aa)) is the S4 RNA-binding domain.

It belongs to the universal ribosomal protein uS4 family. As to quaternary structure, part of the 30S ribosomal subunit. Contacts protein S5. The interaction surface between S4 and S5 is involved in control of translational fidelity.

One of the primary rRNA binding proteins, it binds directly to 16S rRNA where it nucleates assembly of the body of the 30S subunit. Functionally, with S5 and S12 plays an important role in translational accuracy. The protein is Small ribosomal subunit protein uS4 of Thermofilum pendens (strain DSM 2475 / Hrk 5).